Here is a 353-residue protein sequence, read N- to C-terminus: MVDTHKLADDVLHLLDNRIEDNYRVCVILVGSPGSGKSTIAEELCQIINEKYHTFLSEHPNVIEVNDRLKPMVNLVDSLKTLQPNEVAEMIENQGLFKDHVEDVNFQPIKYSALTSNNEECTAVVARGGTANAIRIATVDNPVNVNKLAQDSINIAQIVPMDGFHLSRRCLDLFKDPQTAHKRRGSPSTFDSNNFLQLCKILAKTSLCKVSSHHKFYSTSSVFEKLSKTFSQTIPDIFVPGFNHALKDPTPDQYCISKFTRIVILEGLYLLYDQENWKKIYKTLADTGALLVYKIDIDYEATEERVAKRHLQSGLVTTIAEGREKFRSNDLLNGRDIDNHLIKVDNIVHIRND.

31 to 39 (GSPGSGKST) is an ATP binding site.

It belongs to the YFH7 family.

Its function is as follows. ATP-dependent kinase that could be involved in endoplasmic reticulum membrane assembly. This chain is ATP-dependent kinase YFH7 (YFH7), found in Saccharomyces cerevisiae (strain Lalvin EC1118 / Prise de mousse) (Baker's yeast).